The primary structure comprises 506 residues: 2,3-bisphosphoglycerate-independent phosphoglycerate mutase (506 aa).

2 residues coordinate Mn(2+): Asp-9 and Ser-59. The Phosphoserine intermediate role is filled by Ser-59. Residues His-120, 149–150, Arg-181, Arg-187, 254–257, and Lys-327 each bind substrate; these read RD and RADR. 5 residues coordinate Mn(2+): Asp-394, His-398, Asp-435, His-436, and His-452.

It belongs to the BPG-independent phosphoglycerate mutase family. The cofactor is Mn(2+).

It catalyses the reaction (2R)-2-phosphoglycerate = (2R)-3-phosphoglycerate. The protein operates within carbohydrate degradation; glycolysis; pyruvate from D-glyceraldehyde 3-phosphate: step 3/5. Functionally, catalyzes the interconversion of 2-phosphoglycerate and 3-phosphoglycerate. This chain is 2,3-bisphosphoglycerate-independent phosphoglycerate mutase, found in Natronomonas pharaonis (strain ATCC 35678 / DSM 2160 / CIP 103997 / JCM 8858 / NBRC 14720 / NCIMB 2260 / Gabara) (Halobacterium pharaonis).